We begin with the raw amino-acid sequence, 157 residues long: MNCRVVVEAAVPVYDVASADEAVRIAISKTGEMLNPDLNYVEINMGDRHCPHCGETLEPAFLAADESLVALELEMTVFNVERDEHAARIARKEIGQRLENIPLDVLEIEEIPEESDETTEDESSSAESEADADDPPSDQSADESDDVLPEFEELIDE.

Residues 105–157 (VLEIEEIPEESDETTEDESSSAESEADADDPPSDQSADESDDVLPEFEELIDE) are disordered. Residues 106–157 (LEIEEIPEESDETTEDESSSAESEADADDPPSDQSADESDDVLPEFEELIDE) are compositionally biased toward acidic residues.

This sequence belongs to the UPF0212 family.

The polypeptide is UPF0212 protein rrnAC1165 (Haloarcula marismortui (strain ATCC 43049 / DSM 3752 / JCM 8966 / VKM B-1809) (Halobacterium marismortui)).